The sequence spans 229 residues: 7-cyano-7-deazaguanine synthase (229 aa).

Residue L7–L17 coordinates ATP. Residues C191, C199, C202, and C205 each contribute to the Zn(2+) site.

The protein belongs to the QueC family. It depends on Zn(2+) as a cofactor.

It catalyses the reaction 7-carboxy-7-deazaguanine + NH4(+) + ATP = 7-cyano-7-deazaguanine + ADP + phosphate + H2O + H(+). It functions in the pathway purine metabolism; 7-cyano-7-deazaguanine biosynthesis. Its function is as follows. Catalyzes the ATP-dependent conversion of 7-carboxy-7-deazaguanine (CDG) to 7-cyano-7-deazaguanine (preQ(0)). The polypeptide is 7-cyano-7-deazaguanine synthase (Nostoc sp. (strain PCC 7120 / SAG 25.82 / UTEX 2576)).